The sequence spans 98 residues: Aspartyl/glutamyl-tRNA(Asn/Gln) amidotransferase subunit C (98 aa).

Belongs to the GatC family. Heterotrimer of A, B and C subunits.

The enzyme catalyses L-glutamyl-tRNA(Gln) + L-glutamine + ATP + H2O = L-glutaminyl-tRNA(Gln) + L-glutamate + ADP + phosphate + H(+). The catalysed reaction is L-aspartyl-tRNA(Asn) + L-glutamine + ATP + H2O = L-asparaginyl-tRNA(Asn) + L-glutamate + ADP + phosphate + 2 H(+). Functionally, allows the formation of correctly charged Asn-tRNA(Asn) or Gln-tRNA(Gln) through the transamidation of misacylated Asp-tRNA(Asn) or Glu-tRNA(Gln) in organisms which lack either or both of asparaginyl-tRNA or glutaminyl-tRNA synthetases. The reaction takes place in the presence of glutamine and ATP through an activated phospho-Asp-tRNA(Asn) or phospho-Glu-tRNA(Gln). This Beutenbergia cavernae (strain ATCC BAA-8 / DSM 12333 / CCUG 43141 / JCM 11478 / NBRC 16432 / NCIMB 13614 / HKI 0122) protein is Aspartyl/glutamyl-tRNA(Asn/Gln) amidotransferase subunit C.